The sequence spans 1231 residues: STE20-like serine/threonine-protein kinase (1231 aa).

Ser-14 carries the phosphoserine modification. The Protein kinase domain occupies 34 to 292 (WETIGELGDG…TSQLLQHPFV (259 aa)). ATP is bound by residues 40 to 48 (LGDGAFGKV) and Lys-63. Asp-155 functions as the Proton acceptor in the catalytic mechanism. Thr-183 carries the phosphothreonine modification. Position 189 is a phosphoserine (Ser-189). The disordered stretch occupies residues 309–351 (AEVTEEVEDGKEEDDDEEIENSLPIPTNKRASSDLSIASSEED). Acidic residues predominate over residues 312-328 (TEEVEDGKEEDDDEEIE). A phosphoserine mark is found at Ser-330, Ser-340, Ser-341, Ser-344, Ser-347, Ser-348, Ser-354, and Ser-372. Positions 337–347 (KRASSDLSIAS) are enriched in polar residues. A disordered region spans residues 405 to 478 (PDRATELPES…KQPVLENKLV (74 aa)). 2 stretches are compositionally biased toward basic and acidic residues: residues 407–428 (RATE…RLPD) and 446–478 (DHAV…NKLV). A Phosphoserine modification is found at Ser-507. Residues 516–531 (THEKLRKDDTTQKDVI) are compositionally biased toward basic and acidic residues. Residues 516 to 757 (THEKLRKDDT…TGSTADNSSI (242 aa)) form a disordered region. 2 positions are modified to phosphoserine: Ser-536 and Ser-554. A compositionally biased stretch (basic and acidic residues) spans 601 to 613 (TDQKLVENTHEKQ). Polar residues predominate over residues 615 to 624 (PISSETTLDT). 2 positions are modified to phosphoserine: Ser-641 and Ser-661. The span at 641–660 (STEEVEVEGAVSETDEEDVQ) shows a compositional bias: acidic residues. Positions 683 to 692 (EAPAQVEVQV) are enriched in low complexity. Residues 693-706 (PVPPQPSEPPPAPI) are compositionally biased toward pro residues. The residue at position 775 (Ser-775) is a Phosphoserine. Position 810 is a phosphothreonine (Thr-810). A Phosphoserine modification is found at Ser-814. Positions 822-1065 (LRRQELRELR…LKNRQTQERA (244 aa)) form a coiled coil. The region spanning 871–906 (DQEIENLEKQQKQTIERLEQEHTNRLRDEAKRIKGE) is the UVR domain. Phosphothreonine is present on Thr-1093. Residues 1105-1179 (SAQEEKRQKN…ELKEWREKLR (75 aa)) adopt a coiled-coil conformation.

This sequence belongs to the protein kinase superfamily. STE Ser/Thr protein kinase family. STE20 subfamily. In terms of processing, proteolytically cleaved by caspase-3. Autophosphorylated. As to expression, ubiquitously expressed.

It is found in the cytoplasm. The catalysed reaction is L-seryl-[protein] + ATP = O-phospho-L-seryl-[protein] + ADP + H(+). It catalyses the reaction L-threonyl-[protein] + ATP = O-phospho-L-threonyl-[protein] + ADP + H(+). Functionally, mediates apoptosis and actin stress fiber dissolution. The protein is STE20-like serine/threonine-protein kinase (SLK) of Cavia porcellus (Guinea pig).